Here is a 382-residue protein sequence, read N- to C-terminus: F-box protein At3g19470 (382 aa).

The F-box domain maps to 1–44 (MYNLPRDLPEEVLCRIPLTSLRPVRSTCKKWSTLSKCGSFAKKH).

The protein is F-box protein At3g19470 of Arabidopsis thaliana (Mouse-ear cress).